The following is a 493-amino-acid chain: MERKFSDQELIRRTHLQELKNQNKNPFLITKVDRSMFLKDFAEKYKNFSKEELHNMDLEKLTLAGRLIGIRQTFGIIQDFSAKLQIYINKKNVAPEVFSTFKSLDIGDIIELEGVAMKTNSDEITLNVTNIRLVAKSLKVLPEKYHGLVDEEIKARQRYLDLIVNDETKNTFIKRSLIIREMRNWLDNKGFFEVETPVLQDILSGAAARPFITHHNTLNKEYYLRIATEIALKKCIIGGFEKVYEIGRIFRNEGMDSTHNPEFTSVELYIAYVDLWYIMQLTEDLIRHIATKLNLLNPTFRGFSIDLNKPFKKAHMVDLINEYVGVNFFEVKSDEQAIELAKKHHVKLLDHQKNFGHIVNAFFETFVEEKLVEPTFVYGHPLQVSPLTKKNQSDPRFVDRFELFICQKEFANAYSEINDPIDQYERFIAQLEEAKLGNDEASELDMEFIEALEYGMPPTGGLGIGVDRLVMLLTSNDSIRNVLLFPHMKDKTK.

Mg(2+)-binding residues include Glu402 and Glu409.

The protein belongs to the class-II aminoacyl-tRNA synthetase family. Homodimer. Requires Mg(2+) as cofactor.

Its subcellular location is the cytoplasm. The catalysed reaction is tRNA(Lys) + L-lysine + ATP = L-lysyl-tRNA(Lys) + AMP + diphosphate. The sequence is that of Lysine--tRNA ligase from Ureaplasma parvum serovar 3 (strain ATCC 27815 / 27 / NCTC 11736).